The following is a 641-amino-acid chain: MIGRMVGLEPSSRSGVLEECRECRAIVMKGDGVQTPLHKGDSILGGEGACLMRYAAWTLISAVDVVYCSLETRESVSLTFNPDGQVIVVPFMFKGYNIAALPTTKFGDLKKDTKQIENVVSFLRSDICYAVWEFLVSSVQYKDDDRFERLFDERMRGYLRNISEGTSKVYMRGNKTFSELLEMVCGRMLECSGRVAGGGGIVRYGRDVMRMLDDMIENPPAGMSEEEKKVYLEDWRSAKEWGGFLYSIERWERIAEVEKIVCNACKEICLGLREEELLGLLAEGGMKKTLKEEFSEDKAKDARYLEYIVVDDVLLLDAHREYGGEVTKELVRQMLLGKEGKDIDKRYVDRVAGVVRERQRKREEETERSVKELVGDEEKAKSKEEKAKSKRGRKGKSASAPSEQEEEKKESEVEEAEQGGEVEALPVEVGGARSKGGKKKSKGGRKCFKIHRRVLRWTKSPEKIKEEWDKGSEERWKGRSLEEIKEQKIVHDITGVLELLRSEDADRFFMDAGKYRKGGSERQRMVAIGALETGGQRMTGVVEVGTFKDGDGCPVVYHLRFKPTSIGSIGDVINPGVVEASDVGRVDEGEECEDADKFVYPKGVRFETVKETGSFQIVWKNPSDTSEVLRRLIVYCRPCVI.

The segment covering 358 to 387 (RQRKREEETERSVKELVGDEEKAKSKEEKA) has biased composition (basic and acidic residues). A disordered region spans residues 358–444 (RQRKREEETE…KGGKKKSKGG (87 aa)). Residues 435-444 (KGGKKKSKGG) are compositionally biased toward basic residues.

Belongs to the UPF0329 family.

This is UPF0329 protein ECU11_0030 from Encephalitozoon cuniculi (strain GB-M1) (Microsporidian parasite).